Here is a 250-residue protein sequence, read N- to C-terminus: 3-deoxy-manno-octulosonate cytidylyltransferase (250 aa).

The protein belongs to the KdsB family.

It localises to the cytoplasm. It carries out the reaction 3-deoxy-alpha-D-manno-oct-2-ulosonate + CTP = CMP-3-deoxy-beta-D-manno-octulosonate + diphosphate. It functions in the pathway nucleotide-sugar biosynthesis; CMP-3-deoxy-D-manno-octulosonate biosynthesis; CMP-3-deoxy-D-manno-octulosonate from 3-deoxy-D-manno-octulosonate and CTP: step 1/1. Its pathway is bacterial outer membrane biogenesis; lipopolysaccharide biosynthesis. In terms of biological role, activates KDO (a required 8-carbon sugar) for incorporation into bacterial lipopolysaccharide in Gram-negative bacteria. The sequence is that of 3-deoxy-manno-octulosonate cytidylyltransferase from Legionella pneumophila (strain Corby).